A 1440-amino-acid chain; its full sequence is Glucose transporter type 1 (1440 aa).

The signal sequence occupies residues 1-23 (MAFLCAPGLTFFLTYSIFSAVLG). The Cytoplasmic portion of the chain corresponds to 24-67 (MLQFGYNTGVINAPEKNIENFMKDVYKDRYGEDISEEFIQQLYS). The helical transmembrane segment at 68–88 (VAVSIFAIGGMLGGFSGGWMA) threads the bilayer. Residues 89 to 95 (NRFGRKG) are Extracellular-facing. Residues 96 to 116 (GLLLNNVLGIAGACLMGFTKV) traverse the membrane as a helical segment. At 117–127 (SHSYEMLFLGR) the chain is on the cytoplasmic side. A helical membrane pass occupies residues 128–148 (FIIGVNCGLNTSLVPMYISEI). Topologically, residues 149-162 (APLNLRGGLGTVNQ) are extracellular. D-glucose is bound at residue Gln-162. A helical membrane pass occupies residues 163–183 (LAVTVGLLLSQVLGIEQILGT). Over 184 to 186 (NEG) the chain is Cytoplasmic. The chain crosses the membrane as a helical span at residues 187–207 (WPILLGLAICPAILQLILLPV). The Extracellular segment spans residues 208–272 (CPESPRYLLI…LICSPTLRPP (65 aa)). A helical membrane pass occupies residues 273 to 293 (LIIGIVMQLSQQFSGINAVFY). D-glucose is bound by residues 283–284 (QQ) and Asn-289. At 294-310 (YSTSLFMSSGLTEESAK) the chain is on the cytoplasmic side. A helical transmembrane segment spans residues 311–331 (FATIGIGAIMVVMTLVSIPLM). The Extracellular portion of the chain corresponds to 332 to 339 (DRTGRRTL). The helical transmembrane segment at 340 to 360 (HLYGLGGMFIFSIFITISFLI) threads the bilayer. The Cytoplasmic portion of the chain corresponds to 361–372 (KEMIDWMSYLSV). Residues 373-393 (VATLGFVVFFAVGPGSIPWMI) traverse the membrane as a helical segment. Residue Trp-391 coordinates D-glucose. Residues 394–405 (TAELFSQGPRPS) are Extracellular-facing. The helical transmembrane segment at 406–426 (AMAIAVLVNWMANFVVGIGFP) threads the bilayer. Residues 427 to 429 (SMK) are Cytoplasmic-facing. A helical membrane pass occupies residues 430 to 450 (TALENYTFLPFSVFLAIFWIF). Over 451–534 (TYKKVPETKN…GPYPLSDSTN (84 aa)) the chain is Extracellular. Asn-460 and Asn-480 each carry an N-linked (GlcNAc...) asparagine glycan. A helical membrane pass occupies residues 535–555 (LLGPGSSSYGPGGVLGLAGSG). Over 556-1440 (SGLGGQCYTN…RKYTDFLRKK (885 aa)) the chain is Cytoplasmic. 6 disordered regions span residues 628-708 (ERFL…SRYA), 725-808 (QANP…HSVM), 966-987 (APEG…SELP), 1000-1083 (FLAD…GSYH), 1304-1330 (LEGA…PLTH), and 1380-1401 (ANSP…GHHV). The segment covering 669-678 (PPDSASVRST) has biased composition (polar residues). A compositionally biased stretch (low complexity) spans 686 to 704 (QPQQVHHQQQQVHHQQQHQ). Pro residues predominate over residues 730–739 (QAPPQQPAPP). The span at 754–789 (CQQRKHSHSPHHSRHTSPHSHHHHSHHSRHSRRSRR) shows a compositional bias: basic residues. Residues 1313-1330 (STTSEHSSSLPSPQPLTH) show a composition bias toward low complexity.

This sequence belongs to the major facilitator superfamily. Sugar transporter (TC 2.A.1.1) family. Glucose transporter subfamily.

Its subcellular location is the membrane. Facilitative glucose transporter. The polypeptide is Glucose transporter type 1 (Glut1) (Drosophila melanogaster (Fruit fly)).